The following is a 459-amino-acid chain: uncharacterized protein (459 aa).

The residue at position 285 (Lys-285) is an N6-(pyridoxal phosphate)lysine.

The protein belongs to the class-III pyridoxal-phosphate-dependent aminotransferase family.

It localises to the cytoplasm. This is an uncharacterized protein from Schizosaccharomyces pombe (strain 972 / ATCC 24843) (Fission yeast).